The chain runs to 110 residues: Parvalbumin alpha (110 aa).

Ser-2 carries the N-acetylserine modification. A phosphoserine mark is found at Ser-2 and Ser-24. EF-hand domains are found at residues 39–74 (KSAD…FSPD) and 78–110 (LSAK…VAES). Ca(2+)-binding residues include Asp-52, Asp-54, Ser-56, Phe-58, Glu-60, Glu-63, Asp-91, Asp-93, Asp-95, Lys-97, and Glu-102.

It belongs to the parvalbumin family.

Functionally, in muscle, parvalbumin is thought to be involved in relaxation after contraction. It binds two calcium ions. The chain is Parvalbumin alpha (PVALB) from Macaca fuscata fuscata (Japanese macaque).